Consider the following 389-residue polypeptide: E3 ubiquitin-protein ligase E3D (389 aa).

N-acetylalanine is present on A2. Positions 129-159 (PLPGDNWGALVDEWCCHPDPFANKPLHPREN) match the BRAT1-like motif motif. Residue C144 coordinates Zn(2+). The interaction with UBE2C stretch occupies residues 235–257 (LPSERNFPIIPRSQFVQSVLAQC). Residues 353-389 (LPSTTCLELLLILSKSNATLPPSLRCMNSFQVAFLKM) are HECT-like.

Interacts with UBE2C/UbcH10 (E2 ubiquitin-conjugating enzyme). In vitro, interacts with cyclin-B. In terms of processing, ubiquitinated by UBCH10 (E2 ubiquitin-conjugating enzyme).

Its subcellular location is the cytoplasm. It carries out the reaction S-ubiquitinyl-[E2 ubiquitin-conjugating enzyme]-L-cysteine + [acceptor protein]-L-lysine = [E2 ubiquitin-conjugating enzyme]-L-cysteine + N(6)-ubiquitinyl-[acceptor protein]-L-lysine.. It participates in protein modification; protein ubiquitination. E3 ubiquitin-protein ligase which accepts ubiquitin from specific E2 ubiquitin-conjugating enzymes, and transfers it to substrates, generally promoting their degradation by the proteasome. Independently of its E3 ubiquitin-protein ligase activity, acts as an inhibitor of CPSF3 endonuclease activity by blocking CPSF3 active site. The sequence is that of E3 ubiquitin-protein ligase E3D (UBE3D) from Bos taurus (Bovine).